Here is a 54-residue protein sequence, read N- to C-terminus: Zinc-containing ferredoxin A (54 aa).

The disordered stretch occupies residues 1–21; it reads GIDPNYRTSRPEVGTHEGHKV. The segment at 1–36 is N-terminal extension; the sequence is GIDPNYRTSRPEVGTHEGHKVYGPVENPKVLGIHGA. A compositionally biased stretch (basic and acidic residues) spans 9-20; sequence SRPEVGTHEGHK. His-16 and His-19 together coordinate Zn(2+). Lys-29 carries the N6-methyllysine modification. His-34 lines the Zn(2+) pocket. The 20-residue stretch at 35 to 54 folds into the 4Fe-4S ferredoxin-type 1 domain; sequence GAIVGVDFDLCIADGSCINA. Residues Cys-45 and Cys-51 each coordinate [3Fe-4S] cluster.

It depends on [3Fe-4S] cluster as a cofactor. The cofactor is [4Fe-4S] cluster. Requires Zn(2+) as cofactor.

Its function is as follows. Ferredoxins are iron-sulfur proteins that transfer electrons in a wide variety of metabolic reactions. The sequence is that of Zinc-containing ferredoxin A (zfx) from Sulfuracidifex metallicus (Sulfolobus metallicus).